A 152-amino-acid polypeptide reads, in one-letter code: NADH-ubiquinone oxidoreductase chain 4 (152 aa).

A run of 4 helical transmembrane segments spans residues 2-22 (FSGA…YFCL), 43-63 (ILLP…LALP), 84-104 (ITIV…LHMF), and 128-148 (MLMF…NIIL).

It belongs to the complex I subunit 4 family.

The protein resides in the mitochondrion membrane. It catalyses the reaction a ubiquinone + NADH + 5 H(+)(in) = a ubiquinol + NAD(+) + 4 H(+)(out). Core subunit of the mitochondrial membrane respiratory chain NADH dehydrogenase (Complex I) that is believed to belong to the minimal assembly required for catalysis. Complex I functions in the transfer of electrons from NADH to the respiratory chain. The immediate electron acceptor for the enzyme is believed to be ubiquinone. In Macaca fascicularis (Crab-eating macaque), this protein is NADH-ubiquinone oxidoreductase chain 4 (MT-ND4).